The chain runs to 79 residues: U24-theraphotoxin-Cg1a (79 aa).

A signal peptide spans 1 to 19 (MRVLFIIAVLALISVGCYA). The propeptide occupies 20–44 (SEMKDRSSRNEVLSAIFAIEEPQER). Disulfide bonds link Cys46/Cys61, Cys53/Cys66, and Cys60/Cys73. Trp78 carries the post-translational modification Tryptophan amide.

This sequence belongs to the neurotoxin 10 (Hwtx-1) family. 35 (Jztx-27) subfamily. Expressed by the venom gland.

The protein localises to the secreted. Functionally, probable ion channel inhibitor. This is U24-theraphotoxin-Cg1a from Chilobrachys guangxiensis (Chinese earth tiger tarantula).